The primary structure comprises 172 residues: R-phycocyanin-2 beta chain (172 aa).

At N72 the chain carries N4-methylasparagine. Position 82 (C82) interacts with (2R,3E)-phycocyanobilin. (2R,3E)-phycoerythrobilin is bound at residue C153.

This sequence belongs to the phycobiliprotein family. Heterodimer of an alpha and a beta chain. Post-translationally, contains two covalently linked bilin chromophores.

It localises to the cellular thylakoid membrane. Its function is as follows. Light-harvesting photosynthetic bile pigment-protein from the phycobiliprotein complex. In Synechococcus sp. (strain WH8103), this protein is R-phycocyanin-2 beta chain (rpcB).